A 100-amino-acid polypeptide reads, in one-letter code: NADH-quinone oxidoreductase subunit K (100 aa).

The next 3 helical transmembrane spans lie at 4 to 24 (TTWV…GLLS), 28 to 48 (LLFI…LFIA), and 60 to 80 (IMYL…LALV).

The protein belongs to the complex I subunit 4L family. In terms of assembly, NDH-1 is composed of 13 different subunits. Subunits NuoA, H, J, K, L, M, N constitute the membrane sector of the complex.

It is found in the cell inner membrane. It catalyses the reaction a quinone + NADH + 5 H(+)(in) = a quinol + NAD(+) + 4 H(+)(out). Functionally, NDH-1 shuttles electrons from NADH, via FMN and iron-sulfur (Fe-S) centers, to quinones in the respiratory chain. The immediate electron acceptor for the enzyme in this species is believed to be ubiquinone. Couples the redox reaction to proton translocation (for every two electrons transferred, four hydrogen ions are translocated across the cytoplasmic membrane), and thus conserves the redox energy in a proton gradient. The polypeptide is NADH-quinone oxidoreductase subunit K (Shewanella woodyi (strain ATCC 51908 / MS32)).